Reading from the N-terminus, the 239-residue chain is Probable methylthioribulose-1-phosphate dehydratase (239 aa).

Residue Cys100 coordinates substrate. Residues His118 and His120 each contribute to the Zn(2+) site. Glu141 acts as the Proton donor/acceptor in catalysis. A Zn(2+)-binding site is contributed by His197.

It belongs to the aldolase class II family. MtnB subfamily. Requires Zn(2+) as cofactor.

It localises to the cytoplasm. It catalyses the reaction 5-(methylsulfanyl)-D-ribulose 1-phosphate = 5-methylsulfanyl-2,3-dioxopentyl phosphate + H2O. It participates in amino-acid biosynthesis; L-methionine biosynthesis via salvage pathway; L-methionine from S-methyl-5-thio-alpha-D-ribose 1-phosphate: step 2/6. Its function is as follows. Catalyzes the dehydration of methylthioribulose-1-phosphate (MTRu-1-P) into 2,3-diketo-5-methylthiopentyl-1-phosphate (DK-MTP-1-P). This is Probable methylthioribulose-1-phosphate dehydratase from Leishmania major.